The following is a 60-amino-acid chain: MLNTQRAQEIAASPIMANVTYQEVPIYIQHVDEQNETARIYPLDNPELEQDVPLSQLMEH.

Belongs to the SspH family.

It is found in the spore core. The chain is Small, acid-soluble spore protein H from Halalkalibacterium halodurans (strain ATCC BAA-125 / DSM 18197 / FERM 7344 / JCM 9153 / C-125) (Bacillus halodurans).